The following is a 150-amino-acid chain: MANATSGVAVSEECKARFQELRAGRAHRFVVFKIDDAMRQVVVDRVGPRDAGFDELTASLPADGCRYAVYDHDFTVSDATATAAAGEGGEAPRSKIFFVSWSPAAADVRSKMVYASSNEGFKKELDGVQIDLQATDPSELTLDVLKDHTS.

The ADF-H domain occupies 7-150; sequence GVAVSEECKA…TLDVLKDHTS (144 aa).

The protein belongs to the actin-binding proteins ADF family.

In terms of biological role, actin-depolymerizing protein. Severs actin filaments (F-actin) and binds to actin monomers. This is Actin-depolymerizing factor 3 (ADF3) from Oryza sativa subsp. japonica (Rice).